The following is a 755-amino-acid chain: Tryptophan 2-monooxygenase (755 aa).

FMN is bound by residues Ser-247, Glu-267, Lys-275, and Arg-295. Position 295 (Arg-295) interacts with substrate.

Belongs to the tryptophan 2-monooxygenase family. The cofactor is FMN.

It carries out the reaction L-tryptophan + O2 = indole-3-acetamide + CO2 + H2O. It participates in plant hormone metabolism; auxin biosynthesis. The protein is Tryptophan 2-monooxygenase (iaaM) of Agrobacterium vitis (Rhizobium vitis).